A 207-amino-acid chain; its full sequence is Uracil phosphoribosyltransferase (207 aa).

5-phospho-alpha-D-ribose 1-diphosphate-binding positions include R77, R102, and 129 to 137; that span reads DPMLATGGS. Uracil-binding positions include I192 and 197-199; that span reads GDA. Residue D198 participates in 5-phospho-alpha-D-ribose 1-diphosphate binding.

This sequence belongs to the UPRTase family. The cofactor is Mg(2+).

It carries out the reaction UMP + diphosphate = 5-phospho-alpha-D-ribose 1-diphosphate + uracil. The protein operates within pyrimidine metabolism; UMP biosynthesis via salvage pathway; UMP from uracil: step 1/1. Its activity is regulated as follows. Allosterically activated by GTP. Its function is as follows. Catalyzes the conversion of uracil and 5-phospho-alpha-D-ribose 1-diphosphate (PRPP) to UMP and diphosphate. This Ureaplasma parvum serovar 3 (strain ATCC 27815 / 27 / NCTC 11736) protein is Uracil phosphoribosyltransferase.